The following is a 220-amino-acid chain: Cytidylate kinase (220 aa).

G10 to T18 is a binding site for ATP.

This sequence belongs to the cytidylate kinase family. Type 1 subfamily.

Its subcellular location is the cytoplasm. The catalysed reaction is CMP + ATP = CDP + ADP. It catalyses the reaction dCMP + ATP = dCDP + ADP. This chain is Cytidylate kinase, found in Lactococcus lactis subsp. cremoris (strain MG1363).